The sequence spans 282 residues: Bis(5'-nucleosyl)-tetraphosphatase, symmetrical (282 aa).

Belongs to the Ap4A hydrolase family.

It carries out the reaction P(1),P(4)-bis(5'-adenosyl) tetraphosphate + H2O = 2 ADP + 2 H(+). Functionally, hydrolyzes diadenosine 5',5'''-P1,P4-tetraphosphate to yield ADP. The protein is Bis(5'-nucleosyl)-tetraphosphatase, symmetrical of Burkholderia thailandensis (strain ATCC 700388 / DSM 13276 / CCUG 48851 / CIP 106301 / E264).